We begin with the raw amino-acid sequence, 297 residues long: Methionyl-tRNA formyltransferase (297 aa).

The disordered stretch occupies residues glutamine 31 to glutamate 52. Serine 108–proline 111 contributes to the (6S)-5,6,7,8-tetrahydrofolate binding site.

Belongs to the Fmt family.

It carries out the reaction L-methionyl-tRNA(fMet) + (6R)-10-formyltetrahydrofolate = N-formyl-L-methionyl-tRNA(fMet) + (6S)-5,6,7,8-tetrahydrofolate + H(+). Functionally, attaches a formyl group to the free amino group of methionyl-tRNA(fMet). The formyl group appears to play a dual role in the initiator identity of N-formylmethionyl-tRNA by promoting its recognition by IF2 and preventing the misappropriation of this tRNA by the elongation apparatus. This is Methionyl-tRNA formyltransferase from Paracoccus denitrificans (strain Pd 1222).